Consider the following 241-residue polypeptide: 3-dehydroquinate dehydratase (241 aa).

3-dehydroquinate-binding positions include 35–37 (ELR) and R70. Catalysis depends on H133, which acts as the Proton donor/acceptor. Residue K160 is the Schiff-base intermediate with substrate of the active site. Residues R202 and Q225 each contribute to the 3-dehydroquinate site.

It belongs to the type-I 3-dehydroquinase family. In terms of assembly, homodimer.

The catalysed reaction is 3-dehydroquinate = 3-dehydroshikimate + H2O. Its pathway is metabolic intermediate biosynthesis; chorismate biosynthesis; chorismate from D-erythrose 4-phosphate and phosphoenolpyruvate: step 3/7. In terms of biological role, involved in the third step of the chorismate pathway, which leads to the biosynthesis of aromatic amino acids. Catalyzes the cis-dehydration of 3-dehydroquinate (DHQ) and introduces the first double bond of the aromatic ring to yield 3-dehydroshikimate. The polypeptide is 3-dehydroquinate dehydratase (Staphylococcus haemolyticus (strain JCSC1435)).